The primary structure comprises 374 residues: UPF0496 protein At3g28270 (374 aa).

A coiled-coil region spans residues 171 to 210; it reads KVLTTQFERIKKQQESLLEEVSETRKKIQDEISNLEKKTL. The next 2 helical transmembrane spans lie at 214-234 and 235-255; these read VVFGAAFAIVAVASIALIATG and VGAAAGFGALAAPLLAAGWAG. The stretch at 256 to 321 forms a coiled coil; sequence VYTTLDKKKD…MLKLVDNAID (66 aa).

Belongs to the UPF0496 family.

It localises to the membrane. In Arabidopsis thaliana (Mouse-ear cress), this protein is UPF0496 protein At3g28270.